Here is a 380-residue protein sequence, read N- to C-terminus: Cytochrome b (380 aa).

4 helical membrane-spanning segments follow: residues 34 to 54 (FGSLLGLCLVTQILTGLLLAT), 78 to 99 (WLIRNLHANGASFFFICIYLHI), 114 to 134 (WNTGILLLLTLMATAFVGYVL), and 179 to 199 (FFALHFLLPFMIAGLTLIHLT). Heme b is bound by residues His84 and His98. Residues His183 and His197 each coordinate heme b. His202 lines the a ubiquinone pocket. Helical transmembrane passes span 227–247 (LKDTLGFMFMLFLLTTLALFS), 289–309 (LGGVLALAASVLILFLSPLLH), 321–341 (FSQFLFWLLIANLLILTWVGS), and 348–368 (FIIIGQLASLTYFTILLILLP).

The protein belongs to the cytochrome b family. In terms of assembly, the cytochrome bc1 complex contains 11 subunits: 3 respiratory subunits (MT-CYB, CYC1 and UQCRFS1), 2 core proteins (UQCRC1 and UQCRC2) and 6 low-molecular weight proteins (UQCRH/QCR6, UQCRB/QCR7, UQCRQ/QCR8, UQCR10/QCR9, UQCR11/QCR10 and a cleavage product of UQCRFS1). This cytochrome bc1 complex then forms a dimer. The cofactor is heme b.

It is found in the mitochondrion inner membrane. Its function is as follows. Component of the ubiquinol-cytochrome c reductase complex (complex III or cytochrome b-c1 complex) that is part of the mitochondrial respiratory chain. The b-c1 complex mediates electron transfer from ubiquinol to cytochrome c. Contributes to the generation of a proton gradient across the mitochondrial membrane that is then used for ATP synthesis. This Garrodia nereis (Grey-backed storm-petrel) protein is Cytochrome b (MT-CYB).